Consider the following 161-residue polypeptide: Globin CTT-VIIB-10 (161 aa).

The first 16 residues, 1-16, serve as a signal peptide directing secretion; it reads MKFFAVLALCIVGAIA. Residues 18 to 161 enclose the Globin domain; it reads PLTADEASLV…NTFAIVVPRL (144 aa). His76 and His111 together coordinate heme b.

The protein belongs to the globin family. In terms of assembly, homodimer.

The sequence is that of Globin CTT-VIIB-10 (CTT-7B10) from Chironomus thummi thummi (Midge).